A 62-amino-acid chain; its full sequence is Large ribosomal subunit protein eL19 (62 aa).

The protein belongs to the eukaryotic ribosomal protein eL19 family.

This Zea mays (Maize) protein is Large ribosomal subunit protein eL19 (RPL19).